A 279-amino-acid chain; its full sequence is Tryptophan synthase alpha chain (279 aa).

Active-site proton acceptor residues include E50 and D61.

The protein belongs to the TrpA family. In terms of assembly, tetramer of two alpha and two beta chains.

The catalysed reaction is (1S,2R)-1-C-(indol-3-yl)glycerol 3-phosphate + L-serine = D-glyceraldehyde 3-phosphate + L-tryptophan + H2O. It functions in the pathway amino-acid biosynthesis; L-tryptophan biosynthesis; L-tryptophan from chorismate: step 5/5. Its function is as follows. The alpha subunit is responsible for the aldol cleavage of indoleglycerol phosphate to indole and glyceraldehyde 3-phosphate. This is Tryptophan synthase alpha chain from Brucella melitensis biotype 1 (strain ATCC 23456 / CCUG 17765 / NCTC 10094 / 16M).